The primary structure comprises 686 residues: tRNA wybutosine-synthesizing protein 4 (686 aa).

Basic and acidic residues predominate over residues 1–10 (MGPRSRERRA). Positions 1–21 (MGPRSRERRAGAVQNTNDSSA) are disordered. Residues Arg59, Gly89, Asp114, 161–162 (DL), and Glu188 contribute to the S-adenosyl-L-methionine site.

The protein belongs to the methyltransferase superfamily. LCMT family. Interacts with RNF144B/IBRDC2.

It catalyses the reaction 7-[(3S)-3-amino-3-carboxypropyl]wyosine(37) in tRNA(Phe) + S-adenosyl-L-methionine = 7-[(3S)-(3-amino-3-methoxycarbonyl)propyl]wyosine(37) in tRNA(Phe) + S-adenosyl-L-homocysteine. The catalysed reaction is 7-[(3S)-(3-amino-3-methoxycarbonyl)propyl]wyosine(37) in tRNA(Phe) + S-adenosyl-L-methionine + CO2 = wybutosine(37) in tRNA(Phe) + S-adenosyl-L-homocysteine + 2 H(+). It functions in the pathway tRNA modification; wybutosine-tRNA(Phe) biosynthesis. Functionally, probable S-adenosyl-L-methionine-dependent methyltransferase that acts as a component of the wybutosine biosynthesis pathway. Wybutosine is a hyper modified guanosine with a tricyclic base found at the 3'-position adjacent to the anticodon of eukaryotic phenylalanine tRNA. May methylate the carboxyl group of leucine residues to form alpha-leucine ester residues. The sequence is that of tRNA wybutosine-synthesizing protein 4 (LCMT2) from Homo sapiens (Human).